A 147-amino-acid polypeptide reads, in one-letter code: UPF0208 membrane protein SO_2914 (147 aa).

Helical transmembrane passes span 40–60 (LAIL…LYTY) and 68–88 (ALTI…WLGW).

Belongs to the UPF0208 family.

It localises to the cell inner membrane. This is UPF0208 membrane protein SO_2914 from Shewanella oneidensis (strain ATCC 700550 / JCM 31522 / CIP 106686 / LMG 19005 / NCIMB 14063 / MR-1).